The following is a 375-amino-acid chain: Filamin-binding LIM protein 1 (375 aa).

The interval 1-70 (MASKPEKRVA…SPWTPPGRAA (70 aa)) is filamin-binding. Disordered stretches follow at residues 43-119 (WEAP…PSEE) and 137-176 (HLSP…AERV). 2 stretches are compositionally biased toward pro residues: residues 104-114 (FPPPPPPPPVL) and 140-149 (PPLPPPPPQA). Over residues 150–159 (PAERPSVQPS) the composition is skewed to low complexity. LIM zinc-binding domains follow at residues 183 to 244 (DICA…TLER), 245 to 302 (CGKC…RKFA), and 303 to 372 (PVCS…RSAA). The segment at 278–375 (IGDESFALGS…HVKRSAAGCC (98 aa)) is FERMT2-binding.

As to quaternary structure, interacts with FERMT2, FLNA, FLNB and FLNC. Interacts with NKX2-5.

It localises to the cell junction. The protein resides in the focal adhesion. The protein localises to the cytoplasm. Its subcellular location is the cytoskeleton. It is found in the stress fiber. Functionally, serves as an anchoring site for cell-ECM adhesion proteins and filamin-containing actin filaments. Is implicated in cell shape modulation (spreading) and motility. May participate in the regulation of filamin-mediated cross-linking and stabilization of actin filaments. May also regulate the assembly of filamin-containing signaling complexes that control actin assembly. Promotes dissociation of FLNA from ITGB3 and ITGB7. Promotes activation of integrins and regulates integrin-mediated cell-cell adhesion. In Pongo abelii (Sumatran orangutan), this protein is Filamin-binding LIM protein 1 (FBLIM1).